Consider the following 263-residue polypeptide: Sepiapterin reductase (263 aa).

NADP(+) contacts are provided by residues 18–24 (GASRGFG), 46–47 (RT), and 73–74 (DL). Residues 160–161 (SL) and Tyr-173 each bind substrate. Lys-177 is an NADP(+) binding site. Gly-202 is a binding site for substrate. An NADP(+)-binding site is contributed by 204–209 (LDTDMH). Residue Asp-260 coordinates substrate.

It belongs to the sepiapterin reductase family. Homodimer.

Its subcellular location is the cytoplasm. The catalysed reaction is L-erythro-7,8-dihydrobiopterin + NADP(+) = L-sepiapterin + NADPH + H(+). It carries out the reaction (6R)-L-erythro-5,6,7,8-tetrahydrobiopterin + 2 NADP(+) = 6-pyruvoyl-5,6,7,8-tetrahydropterin + 2 NADPH + 2 H(+). In terms of biological role, catalyzes the final one or two reductions in tetra-hydrobiopterin biosynthesis to form 5,6,7,8-tetrahydrobiopterin. The protein is Sepiapterin reductase (spr) of Xenopus laevis (African clawed frog).